The following is a 368-amino-acid chain: MHVMRLSIHRLRRFQTVELHPASALNLLTGDNGAGKTSVLEALHLMAYGRSFRGRVRDGLIQQGANDLEVFVEWKEGGSAAGERTRRAGLRHSGQEWTGRLDGEDVAQLGSLCAALAVVTFEPGSHVLISGGGEPRRRFLDWGLFHVEPDFLALWRRYVRALKQRNALLKQGAQPRMLDAWDHELAESGETLTSRRMRYLERLQDRLIPVADVIAPSLGLSALTFAPGWKRHEVSLADALLLARDRDRQNGYTSQGPHRADWMPHFDVLPGKDALSRGQAKLTALACLLAQAEDFAFERSEWPVIALDDLGSELDRHHQARVLHRLVSAPAQMLITATEIPPGLADAGALLHRFHVEHGQVALQAPSD.

Gly-30–Thr-37 lines the ATP pocket.

The protein belongs to the RecF family.

It localises to the cytoplasm. Functionally, the RecF protein is involved in DNA metabolism; it is required for DNA replication and normal SOS inducibility. RecF binds preferentially to single-stranded, linear DNA. It also seems to bind ATP. The sequence is that of DNA replication and repair protein RecF from Xanthomonas oryzae pv. oryzae (strain KACC10331 / KXO85).